Here is a 947-residue protein sequence, read N- to C-terminus: MEFSWGSGQESQRLLLSFLLLAIWEAGNSQIHYSIPEEAKHGTFVGRIAQDLGLELTELVPRLFRVASKDRGDLLEVNLQNGILFVNSRIDREELCGRSAECSIHLEVIVDRPLQVFHVEVEVRDINDNPPRFPTTQKNLFIAESRPLDTWFPLEGASDADIGINAVLTYRLSPNDYFSLEKPSNDERVKGLGLVLRKSLDREETPEIILVLTVTDGGKPELTGSVQLLITVLDANDNAPVFDRSLYTVKLPENVPNGTLVVKVNASDLDEGVNGDIMYSFSTDISPNVKYKFHIDPVSGEIIVKGYIDFEECKSYEILIEGIDKGQLPLSGHCKVIVQVEDINDNVPELEFKSLSLPIRENSPVGTVIALISVSDRDTGVNGQVTCSLTSHVPFKLVSTFKNYYSLVLDSALDRETTADYKVVVTARDGGSPSLWATASVSVEVADVNDNAPVFAQPEYTVFVKENNPPGAHIFTVSAMDADAQENALVSYSLVERRVGERLLSSYVSVHAESGKVFALQPLDHEELELLRFQVSARDAGVPALGSNVTLQVFVLDENDNAPTLLEPEAGVSGGIVSRLVSRSVGAGHVVAKVRAVDADSGYNAWLSYELQSSEGNSRSLFRVGLYTGEISTTRILDEADSPRQRLLVLVKDHGDPAMIVTATVLVSLVENGPVPKAPSRVSTSVTHSEASLVDVNVYLIIAICAVSSLLVLTLLLYTALRCSTVPSESVCGPPKPVMVCSSAVGSWSYSQQRRQRVCSGEYPPKTDLMAFSPSLSDSRDREDQLQSAEDSSGKPRQPNPDWRYSASLRAGMHSSVHLEEAGILRAGPGGPDQQWPTVSSATPEPEAGEVSPPVGAGVNSNSWTFKYGPGNPKQSGPGELPDKFIIPGSPAIISIRQEPANNQIDKSDFITFGKKEETKKKKKKKKGNKTQEKKEKGNSTTDNSDQ.

Positions 1–29 (MEFSWGSGQESQRLLLSFLLLAIWEAGNS) are cleaved as a signal peptide. Cadherin domains are found at residues 30 to 133 (QIHY…PPRF), 134 to 242 (PTTQ…APVF), 243 to 350 (DRSL…VPEL), 351 to 455 (EFKS…APVF), 456 to 565 (AQPE…APTL), and 573 to 681 (SGGI…APSR). Residues 30 to 697 (QIHYSIPEEA…HSEASLVDVN (668 aa)) lie on the Extracellular side of the membrane. Cysteines 96 and 102 form a disulfide. 2 N-linked (GlcNAc...) asparagine glycosylation sites follow: asparagine 257 and asparagine 265. An O-linked (Man) threonine glycan is attached at threonine 438. O-linked (Man) serine glycans are attached at residues serine 440 and serine 442. The N-linked (GlcNAc...) asparagine glycan is linked to asparagine 548. The chain crosses the membrane as a helical span at residues 698–718 (VYLIIAICAVSSLLVLTLLLY). The Cytoplasmic portion of the chain corresponds to 719–947 (TALRCSTVPS…GNSTTDNSDQ (229 aa)). 6 PXXP repeats span residues 734–737 (PPKP), 774–777 (PSLS), 796–799 (PRQP), 829–832 (PGGP), 870–873 (PGNP), and 888–891 (PGSP). Positions 734–891 (PPKPVMVCSS…PDKFIIPGSP (158 aa)) are 6 X 4 AA repeats of P-X-X-P. The tract at residues 738–947 (VMVCSSAVGS…GNSTTDNSDQ (210 aa)) is required for interaction with FYN. Disordered regions lie at residues 761–805 (GEYP…DWRY) and 824–853 (ILRAGPGGPDQQWPTVSSATPEPEAGEVSP). The disordered stretch occupies residues 891-947 (PAIISIRQEPANNQIDKSDFITFGKKEETKKKKKKKKGNKTQEKKEKGNSTTDNSDQ). Residues 906 to 920 (DKSDFITFGKKEETK) show a composition bias toward basic and acidic residues.

Forms homodimers in trans (molecules expressed by two different cells). Forms promiscuous heterodimers in cis (at the plasma membrane of the same cell) with other protocadherins. Interacts with FYN. In terms of tissue distribution, detected in brain throughout embryonic development. Detected in adult brain, in particular in cerebellum and forebrain.

The protein resides in the cell membrane. Its function is as follows. Calcium-dependent cell-adhesion protein involved in cells self-recognition and non-self discrimination. Thereby, it is involved in the establishment and maintenance of specific neuronal connections in the brain. In Mus musculus (Mouse), this protein is Protocadherin alpha-4.